The sequence spans 187 residues: Acireductone dioxygenase (187 aa).

Residues histidine 87, histidine 89, glutamate 93, and histidine 136 each contribute to the Fe(2+) site. Histidine 87, histidine 89, glutamate 93, and histidine 136 together coordinate Ni(2+).

Belongs to the acireductone dioxygenase (ARD) family. Fe(2+) is required as a cofactor. Ni(2+) serves as cofactor.

It is found in the cytoplasm. The protein localises to the nucleus. The enzyme catalyses 1,2-dihydroxy-5-(methylsulfanyl)pent-1-en-3-one + O2 = 4-methylsulfanyl-2-oxobutanoate + formate + 2 H(+). The catalysed reaction is 1,2-dihydroxy-5-(methylsulfanyl)pent-1-en-3-one + O2 = 3-(methylsulfanyl)propanoate + CO + formate + 2 H(+). It participates in amino-acid biosynthesis; L-methionine biosynthesis via salvage pathway; L-methionine from S-methyl-5-thio-alpha-D-ribose 1-phosphate: step 5/6. In terms of biological role, catalyzes 2 different reactions between oxygen and the acireductone 1,2-dihydroxy-3-keto-5-methylthiopentene (DHK-MTPene) depending upon the metal bound in the active site. Fe-containing acireductone dioxygenase (Fe-ARD) produces formate and 2-keto-4-methylthiobutyrate (KMTB), the alpha-ketoacid precursor of methionine in the methionine recycle pathway. Ni-containing acireductone dioxygenase (Ni-ARD) produces methylthiopropionate, carbon monoxide and formate, and does not lie on the methionine recycle pathway. The polypeptide is Acireductone dioxygenase (Cryptococcus neoformans var. neoformans serotype D (strain JEC21 / ATCC MYA-565) (Filobasidiella neoformans)).